The chain runs to 107 residues: Iron-binding protein IscA (107 aa).

The Fe cation site is built by C35, C99, and C101.

It belongs to the HesB/IscA family. As to quaternary structure, homodimer; may form tetramers and higher multimers. Fe cation serves as cofactor.

Is able to transfer iron-sulfur clusters to apo-ferredoxin. Multiple cycles of [2Fe2S] cluster formation and transfer are observed, suggesting that IscA acts catalytically. Recruits intracellular free iron so as to provide iron for the assembly of transient iron-sulfur cluster in IscU in the presence of IscS, L-cysteine and the thioredoxin reductase system TrxA/TrxB. The protein is Iron-binding protein IscA of Pectobacterium atrosepticum (strain SCRI 1043 / ATCC BAA-672) (Erwinia carotovora subsp. atroseptica).